A 336-amino-acid polypeptide reads, in one-letter code: HTH-type transcriptional regulator SyrM (336 aa).

The HTH lysR-type domain occupies 41 to 98; sequence IDLNLLVALEALLEYRNVTHAGQHIGRSQPAMSRALGRLRGLFNDDLLVRSSTGLIPT. Residues 58-77 constitute a DNA-binding region (H-T-H motif); sequence VTHAGQHIGRSQPAMSRALG.

This sequence belongs to the LysR transcriptional regulatory family.

Acts in trans to stimulate nod gene expression via nodD3 and exo gene expression via SyrA. This is HTH-type transcriptional regulator SyrM (syrM) from Rhizobium etli.